We begin with the raw amino-acid sequence, 959 residues long: Autophagy-related protein 18g (959 aa).

WD repeat units lie at residues 376–416 and 438–479; these read AHTS…SHNA and ITSA…AAFQ. Positions 802–832 are disordered; sequence GSIESAESSEEGSTKQMENLHDSDHMSNSIK.

It belongs to the WD repeat PROPPIN family. In terms of assembly, component of the PI(3,5)P2 regulatory complex at least composed of ATG18, SAC/FIG4, FAB1 and VAC14. In terms of tissue distribution, expressed in leaves.

The protein resides in the preautophagosomal structure membrane. The protein localises to the vacuole membrane. Functionally, the PI(3,5)P2 regulatory complex regulates both the synthesis and turnover of phosphatidylinositol 3,5-bisphosphate (PtdIns(3,5)P2). Required for autophagy. The polypeptide is Autophagy-related protein 18g (ATG18G) (Arabidopsis thaliana (Mouse-ear cress)).